The chain runs to 393 residues: F-box protein KIB4 (393 aa).

Positions 12 to 59 (AKQPILVLDLVRLVLERLSFVDFHRARCVSSVWYSASKSCIGGTNPTA) constitute an F-box domain.

It localises to the cytoplasm. The protein resides in the nucleus. The protein localises to the nucleolus. In terms of biological role, component of SCF(ASK-cullin-F-box) E3 ubiquitin ligase complexes, which may mediate the ubiquitination and subsequent proteasomal degradation of target proteins. Required for brassinosteroid (BR) signal transduction. Mediates ASK7/BIN2/SK21 inactivation both by competing with substrate binding (e.g. BZR1) and by promoting its ubiquitination and subsequent proteasomal degradation. This Arabidopsis thaliana (Mouse-ear cress) protein is F-box protein KIB4.